The sequence spans 314 residues: MPRTDNDSWDITQSVGATALGVAAARAAETESENPLISDPFARIFVDAAGKGMWSIYADPALLTKADDLEPDLRGRLQLMIDFMATRTAFFDEFFLAAADAGVRQVVILAAGLDARSWRLPWPDGTVVYELDQPKVLDFKSTTLREHGAQPKAELVNVPIDLRQDWPKALQEAGFDASRPAVWSAEGLVRYLPAQAQDLLFERIDALSVPGSRLASNVPDSGFTDPDRLARQREDMRRMRAAAAKLVDAEITDFDDLWYPEERTPVDSWLRERGWDVSTATFAELMARYGRSIPQGAQDSMPPTLYVSAQRRAG.

S-adenosyl-L-methionine contacts are provided by residues Asp132 and Asp161–Leu162.

This sequence belongs to the UPF0677 family.

Functionally, exhibits S-adenosyl-L-methionine-dependent methyltransferase activity. The chain is Putative S-adenosyl-L-methionine-dependent methyltransferase MAV_0301 from Mycobacterium avium (strain 104).